The primary structure comprises 985 residues: Ras and Rab interactor 3 (985 aa).

The disordered stretch occupies residues Met-1–Glu-24. The SH2 domain occupies Trp-63–Gln-158. Disordered stretches follow at residues Ser-183 to Pro-202, Gln-251 to Ser-293, and Pro-315 to Leu-531. Positions Glu-189–Ala-201 are enriched in basic and acidic residues. 2 stretches are compositionally biased toward pro residues: residues Arg-278 to Pro-288 and Pro-315 to Pro-336. The segment covering Asp-424–Asp-442 has biased composition (basic and acidic residues). Residues Phe-587–Ser-732 form an interaction with RAB5B region. The 144-residue stretch at His-703 to Thr-846 folds into the VPS9 domain. The 87-residue stretch at Gln-877–Leu-963 folds into the Ras-associating domain.

It belongs to the RIN (Ras interaction/interference) family. Interacts with CD2AP, RAB5B, RAB31 and BIN1. As to expression, widely expressed.

Its subcellular location is the cytoplasm. The protein resides in the cytoplasmic vesicle. It localises to the early endosome. Functionally, ras effector protein that functions as a guanine nucleotide exchange (GEF) for RAB5B and RAB31, by exchanging bound GDP for free GTP. Required for normal RAB31 function. This is Ras and Rab interactor 3 (RIN3) from Homo sapiens (Human).